The chain runs to 507 residues: TOM1-like protein 2 (507 aa).

The VHS domain maps to 20–152 (ATDGSLQSED…ELKRRGIEFP (133 aa)). Residue S160 is modified to Phosphoserine. Position 164 is a phosphothreonine (T164). The interval 164–200 (TPQRSVPEMDPAATIPRSQTQPRTTAGTYSSPPPASY) is disordered. One can recognise a GAT domain in the interval 219 to 307 (EQIARLRSEL…VFLRYERFER (89 aa)). A Clathrin-binding motif is present at residues 329–334 (NLIDLG). The segment at 466–507 (ERAKAAETVPDLPSPPTEAPAPASNTSTRKKPERSDDALFAL) is disordered. The span at 498-507 (ERSDDALFAL) shows a compositional bias: basic and acidic residues.

Belongs to the TOM1 family. As to quaternary structure, interacts with clathrin, SRC and TOLLIP. Interacts with MYO6. Ubiquitously expressed. Splicing pattern displays tissue specific variation.

Its function is as follows. Acts as a MYO6/Myosin VI adapter protein that targets myosin VI to endocytic structures. May also play a role in recruiting clathrin to endosomes. May regulate growth factor-induced mitogenic signaling. The protein is TOM1-like protein 2 (Tom1l2) of Mus musculus (Mouse).